Consider the following 507-residue polypeptide: Nucleoporin p54 (507 aa).

9 consecutive repeat copies span residues 5–6 (FG), 25–26 (FG), 28–29 (FG), 53–54 (FG), 61–62 (FG), 63–64 (FG), 67–68 (FG), 87–88 (FG), and 444–445 (FG). The interval 5-445 (FGAPSGTSGT…SQIRMQNHFG (441 aa)) is 9 X 2 AA repeats of F-G.

Belongs to the NUP54 family. As to quaternary structure, component of the p62 complex, a complex composed of NUP62, NUP54, and the isoform p58 and isoform p45 of NUP58. Interacts with NUTF2. Post-translationally, O-glycosylated.

The protein localises to the nucleus. It localises to the nuclear pore complex. Its subcellular location is the nucleus membrane. Its function is as follows. Component of the nuclear pore complex, a complex required for the trafficking across the nuclear membrane. This Homo sapiens (Human) protein is Nucleoporin p54 (NUP54).